The following is a 500-amino-acid chain: Probable transcription factor FPSE_09189 (500 aa).

2 disordered regions span residues 161-197 (MVRHLSNHPPSGTVPVGPCSRPEPSRASQRPEPPSLA) and 457-500 (IRTG…TQLE). Residues 459-474 (TGHEDSSRDGGRENKA) show a composition bias toward basic and acidic residues. A compositionally biased stretch (polar residues) spans 475 to 484 (MNRNRSTGNS).

It localises to the nucleus. Functionally, the two putative transcription factors FPSE_09188 and FPSE_09189 could be responsible for orchestrating expression of the W493 A and B biosynthesis cluster genes. W493 A and B consist of six amino acid residues D-allo-thr, L-Ala, D-Ala, L-Gln, D-Tyr, and L-Val/L-Ile linked to a 3-hydroxy-4-methyltetradecanoic acid polyketide chain. This chain is Probable transcription factor FPSE_09189, found in Fusarium pseudograminearum (strain CS3096) (Wheat and barley crown-rot fungus).